Consider the following 271-residue polypeptide: DNA repair protein RecO (271 aa).

The segment covering 249 to 264 (VRVEDSVRQDGDRDST) has biased composition (basic and acidic residues). Residues 249–271 (VRVEDSVRQDGDRDSTTRTSSPA) form a disordered region.

The protein belongs to the RecO family.

In terms of biological role, involved in DNA repair and RecF pathway recombination. In Rhodococcus jostii (strain RHA1), this protein is DNA repair protein RecO.